Consider the following 249-residue polypeptide: 3-deoxy-D-manno-octulosonic acid kinase (249 aa).

Residue Asp175 is part of the active site.

Belongs to the protein kinase superfamily. KdkA/RfaP family.

Its subcellular location is the cell inner membrane. The catalysed reaction is an alpha-Kdo-(2-&gt;6)-lipid IVA + ATP = a 4-O-phospho-alpha-Kdo-(2-&gt;6)-lipid IVA + ADP + H(+). Its pathway is bacterial outer membrane biogenesis; LPS core biosynthesis. Its function is as follows. Catalyzes the ATP-dependent phosphorylation of the 3-deoxy-D-manno-octulosonic acid (Kdo) residue in Kdo-lipid IV(A) at the 4-OH position. This is 3-deoxy-D-manno-octulosonic acid kinase from Xanthomonas oryzae pv. oryzae (strain PXO99A).